The sequence spans 839 residues: Taste receptor type 1 member 2 (839 aa).

Residues Met1–Ala19 form the signal peptide. Topologically, residues Glu20–Thr566 are extracellular. 8 N-linked (GlcNAc...) asparagine glycosylation sites follow: Asn84, Asn248, Asn292, Asn312, Asn368, Asn428, Asn487, and Asn527. A helical transmembrane segment spans residues Ile567–Phe587. The Cytoplasmic portion of the chain corresponds to Trp588–Pro602. The helical transmembrane segment at Met603–Gly623 threads the bilayer. The Extracellular segment spans residues Pro624 to Ala635. A helical membrane pass occupies residues Leu636–Ile656. Residues Cys657–Ser681 lie on the Cytoplasmic side of the membrane. The chain crosses the membrane as a helical span at residues Met682–Leu702. Over Asn703–Ser727 the chain is Extracellular. A helical transmembrane segment spans residues Leu728–Met748. Residues Gly749–Lys760 are Cytoplasmic-facing. A helical transmembrane segment spans residues Phe761–Ser781. At Ala782–Ser784 the chain is on the extracellular side. Residues Gly785–Leu805 traverse the membrane as a helical segment. Topologically, residues Gly806–Asp839 are cytoplasmic.

Belongs to the G-protein coupled receptor 3 family. TAS1R subfamily. In terms of assembly, forms heterodimers with TAS1R3.

The protein resides in the cell membrane. Putative taste receptor. TAS1R2/TAS1R3 recognizes diverse natural and synthetic sweeteners. This Pongo pygmaeus (Bornean orangutan) protein is Taste receptor type 1 member 2 (TAS1R2).